Reading from the N-terminus, the 130-residue chain is Ribonuclease P protein component 2 (130 aa).

This sequence belongs to the eukaryotic/archaeal RNase P protein component 2 family. Consists of a catalytic RNA component and at least 4-5 protein subunits.

The protein resides in the cytoplasm. It catalyses the reaction Endonucleolytic cleavage of RNA, removing 5'-extranucleotides from tRNA precursor.. In terms of biological role, part of ribonuclease P, a protein complex that generates mature tRNA molecules by cleaving their 5'-ends. This Methanococcus maripaludis (strain C7 / ATCC BAA-1331) protein is Ribonuclease P protein component 2.